The sequence spans 298 residues: tRNA-uridine aminocarboxypropyltransferase 2 (298 aa).

Residue M1 is modified to N-acetylmethionine. The span at 1 to 10 shows a compositional bias: basic and acidic residues; that stretch reads MEPQAEERTL. Residues 1-55 form a disordered region; the sequence is MEPQAEERTLGEPAPPPSGALASPTPDEEERTEGGAPPTATPAGASGDSTSADGL. Positions 34–45 are enriched in low complexity; that stretch reads GGAPPTATPAGA. S132 carries the post-translational modification Phosphoserine. The short motif at 178-181 is the DXTW element; it reads DGTW.

This sequence belongs to the TDD superfamily. DTWD2 family.

The protein resides in the nucleus. It localises to the cytoplasm. The catalysed reaction is a uridine in tRNA + S-adenosyl-L-methionine = a 3-[(3S)-3-amino-3-carboxypropyl]uridine in tRNA + S-methyl-5'-thioadenosine + H(+). In terms of biological role, catalyzes the formation of 3-(3-amino-3-carboxypropyl)uridine (acp3U) at position 20a in the D-loop of several cytoplasmic tRNAs (acp3U(20a)). Also has a weak activity to form acp3U at position 20 in the D-loop of tRNAs (acp3U(20)). Involved in glycoRNA biosynthesis by mediating formation of acp3U, which acts as an attachment site for N-glycans on tRNAs. GlycoRNAs consist of RNAs modified with secretory N-glycans that are presented on the cell surface. The chain is tRNA-uridine aminocarboxypropyltransferase 2 from Mus musculus (Mouse).